The chain runs to 301 residues: Protease HtpX (301 aa).

Helical transmembrane passes span 4–24 (IGLF…ILSL) and 38–58 (LGNL…ISLL). His147 contacts Zn(2+). Glu148 is an active-site residue. His151 serves as a coordination point for Zn(2+). 2 helical membrane-spanning segments follow: residues 155-175 (GDMV…MFFA) and 200-220 (FAIT…IVMW). Zn(2+) is bound at residue Glu226.

Belongs to the peptidase M48B family. It depends on Zn(2+) as a cofactor.

It localises to the cell inner membrane. This Acinetobacter baylyi (strain ATCC 33305 / BD413 / ADP1) protein is Protease HtpX.